The chain runs to 309 residues: Major capsid protein (309 aa).

The interval 64–83 is disordered; sequence PNEVEFSATDETSSTEDHGL.

In terms of assembly, multimerizes.

The protein localises to the virion. Probably the major capsid protein. The protein is Major capsid protein of Pseudomonas phage JBD67.